Reading from the N-terminus, the 583-residue chain is Capsid vertex component 2 (583 aa).

The segment at 1-49 (MANFIWDARILTGDGMEMFPADVKNFIAPPWPIEFWKEPVFTSNRANME) is interaction with major capsid protein/MCP.

It belongs to the herpesviridae CVC2 protein family. As to quaternary structure, heterodimerizes with CVC1. Interacts with major capsid protein/MCP and triplex capsid protein 1/TRX1 at the pentamer vertices. Interacts with the large tegument protein/LTP.

The protein resides in the virion. It localises to the host nucleus. Its function is as follows. Capsid vertex-specific component that plays a role during viral DNA encapsidation, assuring correct genome cleavage and presumably stabilizing capsids that contain full-length viral genomes. Participates in the interaction between the capsid and the tegument through interaction with the large tegument protein/LTP. The sequence is that of Capsid vertex component 2 from Gallus gallus (Chicken).